Consider the following 55-residue polypeptide: Large ribosomal subunit protein bL33A (55 aa).

This sequence belongs to the bacterial ribosomal protein bL33 family.

The polypeptide is Large ribosomal subunit protein bL33A (Mycobacterium sp. (strain JLS)).